A 313-amino-acid chain; its full sequence is Protein FixB (313 aa).

Leu255–Asp283 provides a ligand contact to FAD.

Belongs to the ETF alpha-subunit/FixB family. In terms of assembly, heterodimer of FixA and FixB.

It functions in the pathway amine and polyamine metabolism; carnitine metabolism. In terms of biological role, required for anaerobic carnitine reduction. May bring reductant to CaiA. In Escherichia coli O127:H6 (strain E2348/69 / EPEC), this protein is Protein FixB.